Reading from the N-terminus, the 440-residue chain is Trigger factor (440 aa).

The region spanning 176-261 is the PPIase FKBP-type domain; that stretch reads GDKVVIDYQN…VKSIYVVKDV (86 aa).

The protein belongs to the FKBP-type PPIase family. Tig subfamily.

The protein resides in the cytoplasm. It carries out the reaction [protein]-peptidylproline (omega=180) = [protein]-peptidylproline (omega=0). In terms of biological role, involved in protein export. Acts as a chaperone by maintaining the newly synthesized protein in an open conformation. Functions as a peptidyl-prolyl cis-trans isomerase. The polypeptide is Trigger factor (Ehrlichia canis (strain Jake)).